A 474-amino-acid polypeptide reads, in one-letter code: Iroquois-class homeodomain protein irx-5 (474 aa).

A DNA-binding region (homeobox; TALE-type) is located at residues Asp-109–Asn-171. Disordered regions lie at residues Thr-174 to Gly-222, Glu-252 to Leu-294, and Ser-453 to Ile-474. Positions Glu-182–Asp-199 are enriched in acidic residues. Residues Pro-263–Gln-273 are compositionally biased toward pro residues.

It belongs to the TALE/IRO homeobox family. As to expression, early in gastrulation, expressed in cells beneath the blastopore lip. Subsequently expressed in the neural plate in overlapping patterns with other irx members, which all share an anterior border of expression. At the time of neural tube closure (stage 19) in regions of the midbrain, hindbrain, neural tube and optic vesicle, where expression continues during tailbud stages. In stage 34, expressed throughout the eye retina. Does not appear to be expressed in the developing heart or pronephros.

Its subcellular location is the nucleus. In terms of biological role, acts partially redundantly with other irx members in neural patterning. Required for formation of the posterior forebrain, midbrain, hindbrain, and to a lesser extent, spinal cord. Patterns the neuroectoderm in both the anterior/posterior and dorsal/ventral axes. Does not appear to play a role in pronephros kidney development. Involved in craniofacial and gonadal development. Modulates the migration of progenitor cell populations in branchial arches and gonads by repressing CXCL12. The protein is Iroquois-class homeodomain protein irx-5 (irx5) of Xenopus laevis (African clawed frog).